A 31-amino-acid polypeptide reads, in one-letter code: Cytochrome b6-f complex subunit 6 (31 aa).

Residues 4-24 (LTSYFGFLLAALTITLALFIG) traverse the membrane as a helical segment.

Belongs to the PetL family. The 4 large subunits of the cytochrome b6-f complex are cytochrome b6, subunit IV (17 kDa polypeptide, PetD), cytochrome f and the Rieske protein, while the 4 small subunits are PetG, PetL, PetM and PetN. The complex functions as a dimer.

Its subcellular location is the plastid. The protein resides in the chloroplast thylakoid membrane. Functionally, component of the cytochrome b6-f complex, which mediates electron transfer between photosystem II (PSII) and photosystem I (PSI), cyclic electron flow around PSI, and state transitions. PetL is important for photoautotrophic growth as well as for electron transfer efficiency and stability of the cytochrome b6-f complex. This Triticum aestivum (Wheat) protein is Cytochrome b6-f complex subunit 6.